A 285-amino-acid polypeptide reads, in one-letter code: Bifunctional protein FolD (285 aa).

NADP(+) contacts are provided by residues 165–167 and Ser190; that span reads GRS.

It belongs to the tetrahydrofolate dehydrogenase/cyclohydrolase family. Homodimer.

It catalyses the reaction (6R)-5,10-methylene-5,6,7,8-tetrahydrofolate + NADP(+) = (6R)-5,10-methenyltetrahydrofolate + NADPH. It carries out the reaction (6R)-5,10-methenyltetrahydrofolate + H2O = (6R)-10-formyltetrahydrofolate + H(+). It functions in the pathway one-carbon metabolism; tetrahydrofolate interconversion. Catalyzes the oxidation of 5,10-methylenetetrahydrofolate to 5,10-methenyltetrahydrofolate and then the hydrolysis of 5,10-methenyltetrahydrofolate to 10-formyltetrahydrofolate. In Burkholderia orbicola (strain AU 1054), this protein is Bifunctional protein FolD.